A 198-amino-acid polypeptide reads, in one-letter code: Protein GrpE (198 aa).

It belongs to the GrpE family. Homodimer.

The protein resides in the cytoplasm. Its function is as follows. Participates actively in the response to hyperosmotic and heat shock by preventing the aggregation of stress-denatured proteins, in association with DnaK and GrpE. It is the nucleotide exchange factor for DnaK and may function as a thermosensor. Unfolded proteins bind initially to DnaJ; upon interaction with the DnaJ-bound protein, DnaK hydrolyzes its bound ATP, resulting in the formation of a stable complex. GrpE releases ADP from DnaK; ATP binding to DnaK triggers the release of the substrate protein, thus completing the reaction cycle. Several rounds of ATP-dependent interactions between DnaJ, DnaK and GrpE are required for fully efficient folding. In Actinobacillus pleuropneumoniae serotype 3 (strain JL03), this protein is Protein GrpE.